Consider the following 557-residue polypeptide: Formate--tetrahydrofolate ligase (557 aa).

Position 67-74 (Thr67–Ser74) interacts with ATP.

Belongs to the formate--tetrahydrofolate ligase family.

It carries out the reaction (6S)-5,6,7,8-tetrahydrofolate + formate + ATP = (6R)-10-formyltetrahydrofolate + ADP + phosphate. It participates in one-carbon metabolism; tetrahydrofolate interconversion. The chain is Formate--tetrahydrofolate ligase from Latilactobacillus sakei subsp. sakei (strain 23K) (Lactobacillus sakei subsp. sakei).